Reading from the N-terminus, the 261-residue chain is Troponin T, slow skeletal muscle (261 aa).

Positions 1–30 (MSDTEEQEYEEEQAEDEEAVEEEAPEEPEP) are enriched in acidic residues. Disordered regions lie at residues 1–61 (MSDT…ERVD) and 108–152 (ERAE…KKKV). Ser2 is subject to Phosphoserine; by CK2. The span at 31 to 40 (VAEREEERPK) shows a compositional bias: basic and acidic residues. A compositionally biased stretch (pro residues) spans 42–54 (SRPVVPPLIPPKI). The segment covering 108-148 (ERAEQQRFRTEKERERQAKLAEEKMRKEEEEAKKRAEDDAK) has biased composition (basic and acidic residues).

Belongs to the troponin T family. Interacts with TPM3. In terms of tissue distribution, expressed in soleus muscle. Isoform 4 is predominantly expressed in fast muscles.

Troponin T is the tropomyosin-binding subunit of troponin, the thin filament regulatory complex which confers calcium-sensitivity to striated muscle actomyosin ATPase activity. This Rattus norvegicus (Rat) protein is Troponin T, slow skeletal muscle (Tnnt1).